A 347-amino-acid polypeptide reads, in one-letter code: 5-deoxyribose 1-phosphate isomerase (347 aa).

Residues 48–50, arginine 91, and glutamine 198 each bind substrate; that span reads RGA. Aspartate 239 functions as the Proton donor in the catalytic mechanism. 249-250 serves as a coordination point for substrate; sequence NK.

It belongs to the EIF-2B alpha/beta/delta subunits family. DrdI subfamily.

It carries out the reaction 5-deoxy-alpha-D-ribose 1-phosphate = 5-deoxy-D-ribulose 1-phosphate. Its pathway is carbohydrate degradation. Catalyzes the isomerization of 5-deoxy-alpha-D-ribose 1-phosphate to 5-deoxy-D-ribulose 1-phosphate, as part of a 5-deoxyribose salvage pathway that recycles this toxic radical SAM enzyme by-product to mainstream metabolites. The polypeptide is 5-deoxyribose 1-phosphate isomerase (Bacillus thuringiensis subsp. konkukian (strain 97-27)).